Here is an 87-residue protein sequence, read N- to C-terminus: Costars family protein (87 aa).

The protein belongs to the costars family.

The chain is Costars family protein from Oryza sativa subsp. indica (Rice).